Reading from the N-terminus, the 254-residue chain is Hydroxyethylthiazole kinase (254 aa).

Methionine 40 is a binding site for substrate. Arginine 116 and serine 162 together coordinate ATP. Glycine 189 contacts substrate.

It belongs to the Thz kinase family. It depends on Mg(2+) as a cofactor.

The catalysed reaction is 5-(2-hydroxyethyl)-4-methylthiazole + ATP = 4-methyl-5-(2-phosphooxyethyl)-thiazole + ADP + H(+). The protein operates within cofactor biosynthesis; thiamine diphosphate biosynthesis; 4-methyl-5-(2-phosphoethyl)-thiazole from 5-(2-hydroxyethyl)-4-methylthiazole: step 1/1. In terms of biological role, catalyzes the phosphorylation of the hydroxyl group of 4-methyl-5-beta-hydroxyethylthiazole (THZ). The polypeptide is Hydroxyethylthiazole kinase (Limosilactobacillus fermentum (strain NBRC 3956 / LMG 18251) (Lactobacillus fermentum)).